The chain runs to 182 residues: Early upstream open reading frame (182 aa).

It belongs to the EUO family.

This Chlamydophila psittaci (strain ATCC VR-125 / 6BC) (Chlamydia psittaci) protein is Early upstream open reading frame.